Consider the following 1620-residue polypeptide: NAD-specific glutamate dehydrogenase (1620 aa).

Lys851 is an active-site residue.

This sequence belongs to the Glu/Leu/Phe/Val dehydrogenases family. Homotetramer. Contains disulfide bonds (interchain).

The enzyme catalyses L-glutamate + NAD(+) + H2O = 2-oxoglutarate + NH4(+) + NADH + H(+). Its activity is regulated as follows. Activity subject to allosteric control by arginine and citrate, which function as positive and negative effectors, respectively. Involved in arginine catabolism by converting L-glutamate, into 2-oxoglutarate, which is then channeled into the tricarboxylic acid cycle. Can also utilize other amino acids of the glutamate family. The polypeptide is NAD-specific glutamate dehydrogenase (gdhB) (Pseudomonas aeruginosa (strain ATCC 15692 / DSM 22644 / CIP 104116 / JCM 14847 / LMG 12228 / 1C / PRS 101 / PAO1)).